A 444-amino-acid chain; its full sequence is Trimethylamine monooxygenase (444 aa).

Cys12, Glu37, Gln39, Leu45, and Trp46 together coordinate FAD. Residues Trp70 and Asn72 each coordinate NADP(+). Asn72 and Val125 together coordinate FAD. The NADP(+) site is built by Tyr170, Ser202, Ser203, Ser205, Arg226, His227, and Asn288. Residues Gln315 and Thr318 each contribute to the FAD site. Arg409 is an NADP(+) binding site.

It belongs to the FMO family. As to quaternary structure, homodimer. The cofactor is FAD.

The catalysed reaction is trimethylamine + NADPH + O2 = trimethylamine N-oxide + NADP(+) + H2O. Catalyzes the oxidation of trimethylamine (TMA) to produce trimethylamine N-oxide (TMAO). In vitro, has a broad substrate specificity, oxidizing many nitrogen- and sulfur-containing compounds, including dimethylamine (DMA), dimethylsulfide (DMS), dimethylsulfoxide (DMSO) and methimazole. TMA shows the highest affinity. In Pelagibacter sp. (strain HTCC7211), this protein is Trimethylamine monooxygenase.